The sequence spans 409 residues: Phosphoglycerate kinase (409 aa).

Substrate-binding positions include 23–25 (DIN), 63–66 (HQSR), R120, and R160. Residues E333 and 359 to 362 (GGHL) contribute to the ATP site.

This sequence belongs to the phosphoglycerate kinase family. As to quaternary structure, monomer.

It is found in the cytoplasm. It carries out the reaction (2R)-3-phosphoglycerate + ATP = (2R)-3-phospho-glyceroyl phosphate + ADP. The protein operates within carbohydrate degradation; glycolysis; pyruvate from D-glyceraldehyde 3-phosphate: step 2/5. This chain is Phosphoglycerate kinase (pgk), found in Methanobacterium bryantii.